We begin with the raw amino-acid sequence, 282 residues long: 2-dehydro-3-deoxyphosphooctonate aldolase (282 aa).

This sequence belongs to the KdsA family.

It localises to the cytoplasm. The enzyme catalyses D-arabinose 5-phosphate + phosphoenolpyruvate + H2O = 3-deoxy-alpha-D-manno-2-octulosonate-8-phosphate + phosphate. The protein operates within carbohydrate biosynthesis; 3-deoxy-D-manno-octulosonate biosynthesis; 3-deoxy-D-manno-octulosonate from D-ribulose 5-phosphate: step 2/3. It functions in the pathway bacterial outer membrane biogenesis; lipopolysaccharide biosynthesis. This is 2-dehydro-3-deoxyphosphooctonate aldolase from Shewanella woodyi (strain ATCC 51908 / MS32).